Reading from the N-terminus, the 259-residue chain is L-cysteine S-thiosulfotransferase subunit SoxA (259 aa).

The first 23 residues, 1-23, serve as a signal peptide directing secretion; that stretch reads MRKLWFLPILLGAVGGVSLYAIA. Residues 50-135 form the Cytochrome c domain; sequence VYAEQGRDMF…SIATYVATLS (86 aa). Heme c is bound by residues cysteine 70, cysteine 73, histidine 74, cysteine 108, cysteine 171, cysteine 174, and histidine 175. Arginine 216 contacts substrate. Cysteine 220 serves as a coordination point for heme c. The Cysteine persulfide intermediate role is filled by cysteine 220.

Belongs to the SoxA family. In terms of assembly, heterodimer of SoxA and SoxX. The cofactor is heme c. In terms of processing, cysteine persulfide at Cys-220.

It localises to the periplasm. The catalysed reaction is L-cysteinyl-[SoxY protein] + thiosulfate + 2 Fe(III)-[cytochrome c] = S-sulfosulfanyl-L-cysteinyl-[SoxY protein] + 2 Fe(II)-[cytochrome c] + 2 H(+). It carries out the reaction S-sulfanyl-L-cysteinyl-[SoxY protein] + thiosulfate + 2 Fe(III)-[cytochrome c] = S-(2-sulfodisulfanyl)-L-cysteinyl-[SoxY protein] + 2 Fe(II)-[cytochrome c] + 2 H(+). C-type diheme cytochrome, which is part of the SoxAX cytochrome complex involved in sulfur oxidation. The SoxAX complex catalyzes the formation of a heterodisulfide bond between the conserved cysteine residue on a sulfur carrier SoxYZ complex subunit SoxY and thiosulfate or other inorganic sulfur substrates. This leads to the liberation of two electrons, which may be transferred from the SoxAX complex to another cytochrome c that then channels them into the respiratory electron transport chain. Some electrons may be used for reductive CO(2) fixation. The chain is L-cysteine S-thiosulfotransferase subunit SoxA from Hydrogenobacter thermophilus (strain DSM 6534 / IAM 12695 / TK-6).